The primary structure comprises 485 residues: Probable outer membrane usher protein LpfC' (485 aa).

Belongs to the fimbrial export usher family.

The protein resides in the cell outer membrane. Its function is as follows. Part of the lpfABCC'DE fimbrial operon. LP fimbriae may participate in the interaction with eukaryotic cells by assisting in microcolony formation. Could be involved in the export and assembly of the fimbrial subunits across the outer membrane. The sequence is that of Probable outer membrane usher protein LpfC' (lpfC') from Escherichia coli O157:H7.